The chain runs to 381 residues: 2-oxoglutarate-dependent dioxygenase FGSG_00048 (381 aa).

Belongs to the iron/ascorbate-dependent oxidoreductase family. Requires Fe(2+) as cofactor.

It participates in mycotoxin biosynthesis. In terms of biological role, 2-oxoglutarate-dependent dioxygenase; part of the gene cluster that mediates the biosynthesis of gramillins A and B, bicyclic lipopeptides that induce cell death in maize leaves but not in wheat leaves. The nonribosomal peptide synthetase GRA1 incorporates respectively a glutamic adic (Glu), a leucine (Leu), a serine (Ser), a hydroxyglutamine (HOGln), a 2-amino decanoic acid, and 2 cysteins (CysB and CysA). The biosynthesis of 2-amino decanoic acid incorporated in gramillins could be initiated by a fatty acid synthase composed of the alpha and beta subunits FGSG_00036 and FGSG_11656. The cytochrome P450 monooxygenase FGSG_15680 could hydroxylate the fatty acid chain. Subsequent oxidation to the ketone by the oxidoreductase FGSG_00048 and transamination by aminotransferase FGSG_00049 could form 2-amino-decanoic acid. On the other hand, FGSG_15680 could also be responsible for the HO-modified glutamine at the gamma-position. Whether hydroxylation occurs on the fully assembled product or on the Gln residue prior to assembly into the gramillins requires further proof. The thioredoxin FGSG_00043 could also be required for the disulfide-bond formation between CysA and CysB. The specific involvement of the remaining proteins from the cluster is more difficult to discern, but could have broader regulatory (FGSG_00040 and FGSG_11657) or enzymatic functions (FGSG_00044 and FGSG_00045). The final C-domain of GRA1 does not possess the expected sequence of a termination CT domain, often implicated in macrocyclization and release of a cyclopeptidein fungal NRPs; and the thioesterase FGSG_00047 may act in concert with the terminal C-domain of GRA1 to catalyze the formation of the macrocyclic anhydride and release of the products. The chain is 2-oxoglutarate-dependent dioxygenase FGSG_00048 from Gibberella zeae (strain ATCC MYA-4620 / CBS 123657 / FGSC 9075 / NRRL 31084 / PH-1) (Wheat head blight fungus).